The chain runs to 319 residues: Thiamine pyrophosphokinase (319 aa).

Ser2 is modified (N-acetylserine).

The protein belongs to the thiamine pyrophosphokinase family. As to quaternary structure, homodimer.

It carries out the reaction thiamine + ATP = thiamine diphosphate + AMP + H(+). It functions in the pathway cofactor biosynthesis; thiamine diphosphate biosynthesis; thiamine diphosphate from thiamine: step 1/1. Its function is as follows. Essential protein, it is the only enzyme in yeast capable of synthesizing thiamine pyrophosphate (TPP). This chain is Thiamine pyrophosphokinase, found in Saccharomyces cerevisiae (strain ATCC 204508 / S288c) (Baker's yeast).